The following is a 405-amino-acid chain: uncharacterized protein (405 aa).

12 consecutive transmembrane segments (helical) span residues 19–39 (ILSI…PLAV), 47–67 (VMGF…FATL), 85–105 (IVVF…TAGL), 129–149 (SFAG…LHIG), 157–177 (IVTY…YHWG), 178–198 (GLQA…LLAI), 224–244 (GMAL…ITLF), 252–272 (GAAF…LLFP), 283–303 (VAMI…VATM), 309–329 (IGVL…GVVA), 344–364 (TYTV…GLVM), and 366–386 (WAGV…ALLL).

This sequence belongs to the major facilitator superfamily. YhhS family.

Its subcellular location is the cell inner membrane. This is an uncharacterized protein from Escherichia coli O157:H7.